The chain runs to 149 residues: Large ribosomal subunit protein bL9 (149 aa).

This sequence belongs to the bacterial ribosomal protein bL9 family.

In terms of biological role, binds to the 23S rRNA. This chain is Large ribosomal subunit protein bL9, found in Xanthomonas oryzae pv. oryzae (strain MAFF 311018).